Consider the following 200-residue polypeptide: FMN-dependent NADH:quinone oxidoreductase (200 aa).

FMN-binding positions include Ser10, 96-99 (MYNF), and 140-143 (SRGG).

This sequence belongs to the azoreductase type 1 family. Homodimer. FMN serves as cofactor.

It catalyses the reaction 2 a quinone + NADH + H(+) = 2 a 1,4-benzosemiquinone + NAD(+). The enzyme catalyses N,N-dimethyl-1,4-phenylenediamine + anthranilate + 2 NAD(+) = 2-(4-dimethylaminophenyl)diazenylbenzoate + 2 NADH + 2 H(+). Quinone reductase that provides resistance to thiol-specific stress caused by electrophilic quinones. In terms of biological role, also exhibits azoreductase activity. Catalyzes the reductive cleavage of the azo bond in aromatic azo compounds to the corresponding amines. This Photorhabdus laumondii subsp. laumondii (strain DSM 15139 / CIP 105565 / TT01) (Photorhabdus luminescens subsp. laumondii) protein is FMN-dependent NADH:quinone oxidoreductase.